We begin with the raw amino-acid sequence, 93 residues long: Integration host factor subunit beta (93 aa).

This sequence belongs to the bacterial histone-like protein family. As to quaternary structure, heterodimer of an alpha and a beta chain.

This protein is one of the two subunits of integration host factor, a specific DNA-binding protein that functions in genetic recombination as well as in transcriptional and translational control. This Aliivibrio fischeri (strain ATCC 700601 / ES114) (Vibrio fischeri) protein is Integration host factor subunit beta.